The chain runs to 123 residues: Large-conductance mechanosensitive channel (123 aa).

A run of 2 helical transmembrane segments spans residues valine 14–leucine 34 and glycine 67–valine 87.

Belongs to the MscL family. As to quaternary structure, homopentamer.

The protein localises to the cell membrane. Functionally, channel that opens in response to stretch forces in the membrane lipid bilayer. May participate in the regulation of osmotic pressure changes within the cell. The sequence is that of Large-conductance mechanosensitive channel from Lacticaseibacillus casei (strain BL23) (Lactobacillus casei).